Reading from the N-terminus, the 140-residue chain is Nucleoside diphosphate kinase (140 aa).

ATP-binding residues include K11, F59, R87, T93, R104, and N114. H117 acts as the Pros-phosphohistidine intermediate in catalysis.

The protein belongs to the NDK family. In terms of assembly, homotetramer. Mg(2+) is required as a cofactor.

Its subcellular location is the cytoplasm. It catalyses the reaction a 2'-deoxyribonucleoside 5'-diphosphate + ATP = a 2'-deoxyribonucleoside 5'-triphosphate + ADP. The catalysed reaction is a ribonucleoside 5'-diphosphate + ATP = a ribonucleoside 5'-triphosphate + ADP. Major role in the synthesis of nucleoside triphosphates other than ATP. The ATP gamma phosphate is transferred to the NDP beta phosphate via a ping-pong mechanism, using a phosphorylated active-site intermediate. In Rhizobium johnstonii (strain DSM 114642 / LMG 32736 / 3841) (Rhizobium leguminosarum bv. viciae), this protein is Nucleoside diphosphate kinase.